Consider the following 445-residue polypeptide: Phosphoglucosamine mutase (445 aa).

Catalysis depends on S102, which acts as the Phosphoserine intermediate. The Mg(2+) site is built by S102, D241, D243, and D245. S102 carries the phosphoserine modification.

It belongs to the phosphohexose mutase family. It depends on Mg(2+) as a cofactor. Activated by phosphorylation.

It carries out the reaction alpha-D-glucosamine 1-phosphate = D-glucosamine 6-phosphate. Its function is as follows. Catalyzes the conversion of glucosamine-6-phosphate to glucosamine-1-phosphate. The polypeptide is Phosphoglucosamine mutase (Shigella dysenteriae serotype 1 (strain Sd197)).